Consider the following 574-residue polypeptide: Septation ring formation regulator EzrA (574 aa).

Residues Met1–Leu7 are Extracellular-facing. The chain crosses the membrane as a helical span at residues Leu8 to Ile26. Over Arg27 to Phe574 the chain is Cytoplasmic. Coiled-coil stretches lie at residues Asn102 to Asn141, Glu274 to Ser350, and Gln459 to Ala520.

This sequence belongs to the EzrA family.

Its subcellular location is the cell membrane. Negative regulator of FtsZ ring formation; modulates the frequency and position of FtsZ ring formation. Inhibits FtsZ ring formation at polar sites. Interacts either with FtsZ or with one of its binding partners to promote depolymerization. This is Septation ring formation regulator EzrA from Streptococcus pyogenes serotype M4 (strain MGAS10750).